A 543-amino-acid polypeptide reads, in one-letter code: Sensor histidine kinase DcuS (543 aa).

The Cytoplasmic portion of the chain corresponds to 1–20 (MRHSLPYRMLRKRPMKLSTT). A helical transmembrane segment spans residues 21 to 41 (VILMVSAVLFSVLLVVHLIYF). The Periplasmic portion of the chain corresponds to 42 to 181 (SQISDMTRDG…VTQQINDSRW (140 aa)). (R)-malate-binding positions include 107–110 (RYSH), Lys-121, 140–142 (GFL), and Arg-147. The helical transmembrane segment at 182–202 (SIIWSVLFGMLVGLIGTCILV) threads the bilayer. The Cytoplasmic portion of the chain corresponds to 203–543 (KVLKKILFGL…IPWDGERSNR (341 aa)). The region spanning 212–323 (LEPYEISTLF…IIGAISTFRD (112 aa)) is the PAS domain. Positions 346–538 (ERSHEFMNKL…QFFVQIPWDG (193 aa)) constitute a Histidine kinase domain. His-349 is modified (phosphohistidine; by autocatalysis).

As to quaternary structure, homodimer. Post-translationally, autophosphorylated. The phosphoryl group is rapidly transferred to DcuR.

Its subcellular location is the cell inner membrane. The enzyme catalyses ATP + protein L-histidine = ADP + protein N-phospho-L-histidine.. In terms of biological role, member of the two-component regulatory system DcuR/DcuS. Involved in the C4-dicarboxylate-stimulated regulation of the genes encoding the anaerobic fumarate respiratory system (frdABCD; nuoAN; dcuB; sdhCDAB; etc.). Weakly regulates the aerobic C4-dicarboxylate transporter dctA. Activates DcuR by phosphorylation. The polypeptide is Sensor histidine kinase DcuS (dcuS) (Escherichia coli O157:H7).